Consider the following 449-residue polypeptide: UDP-N-acetylmuramoylalanine--D-glutamate ligase (449 aa).

An ATP-binding site is contributed by 117–123 (GSNGKTT).

This sequence belongs to the MurCDEF family.

It localises to the cytoplasm. The catalysed reaction is UDP-N-acetyl-alpha-D-muramoyl-L-alanine + D-glutamate + ATP = UDP-N-acetyl-alpha-D-muramoyl-L-alanyl-D-glutamate + ADP + phosphate + H(+). Its pathway is cell wall biogenesis; peptidoglycan biosynthesis. Cell wall formation. Catalyzes the addition of glutamate to the nucleotide precursor UDP-N-acetylmuramoyl-L-alanine (UMA). This is UDP-N-acetylmuramoylalanine--D-glutamate ligase from Exiguobacterium sibiricum (strain DSM 17290 / CCUG 55495 / CIP 109462 / JCM 13490 / 255-15).